Reading from the N-terminus, the 787-residue chain is Transcriptional corepressor LEUNIG_HOMOLOG (787 aa).

The tract at residues 1-88 (MAQSNWEADK…IEAQQGKAKE (88 aa)) is required for SEU-binding. In terms of domain architecture, LisH spans 8–40 (ADKMLDVYIYDYLVKKKLHNTAKSFMTEGKVSP). Positions 77–106 (AYIEAQQGKAKEQQMQIQQLQMMRQAQMQR) form a coiled coil. The segment at 299–413 (NMTNSPMYGG…TPSTHTPVDG (115 aa)) is disordered. Low complexity-rich tracts occupy residues 336 to 346 (SIGSPMQSSSS) and 355 to 372 (QQSS…QSQQ). Polar residues predominate over residues 380 to 409 (PSSSGPANSTGTGNTVGPSNSQPSTPSTHT). WD repeat units lie at residues 508–547 (KSAS…VEST), 550–589 (EHAH…YFLR), 593–633 (GHAA…VRAV), 635–671 (GAST…KRVN), 675–715 (GHSS…HELS), 717–755 (SGNK…CMTV), and 757–787 (GHEC…KIWK).

As to quaternary structure, forms corepressor complexes with SLK1 and SLK2; LUH is the transcription repressor subunit and SLK1 and SLK2 the specific DNA-binding adapters. Interacts with SEU. Binds to YAB3, YAB5 and YAB1/FIL; these complexes promote adaxial cell identity in leaves as well as embryonic shoot apical meristem (SAM) initiation and postembryonic SAM maintenance. Expressed in roots, stems, leaves, seedlings, apex, flowers, siliques, flower organs and seeds (including seed coat).

Its subcellular location is the nucleus. Functionally, transcription repressor subunit of the SEU-SLK1 and SEU-SLK2 transcriptional corepressor of abiotic stress (e.g. salt and osmotic stress) response genes, by means of an epigenetic process involving histone modification (e.g. H3K9 and H3K14 acetylation), probably by recruiting HDAC, to facilitate the condensation of chromatin thus preventing transcription at the target genes. Can also act as a transcription activator. Implicated in embryo and floral development. Involved in post-synthesis cell wall modifications necessary for mucilage extrusion from seeds upon imbibition, probably by promoting the expression of genes required for mucilage maturation (e.g. MUM2). Regulates the maintenance on leaf polarity and meristem activity as well as the initiation of embryonic shoot apical meristem (SAM) development. The sequence is that of Transcriptional corepressor LEUNIG_HOMOLOG from Arabidopsis thaliana (Mouse-ear cress).